Consider the following 672-residue polypeptide: Bifunctional polymyxin resistance protein ArnA (672 aa).

The segment at 1–310 (MKAIVFAYHD…EMGMVPQAKL (310 aa)) is formyltransferase ArnAFT. Residue His104 is the Proton donor; for formyltransferase activity of the active site. Residues Arg114 and 136–140 (VSRAD) each bind (6R)-10-formyltetrahydrofolate. The segment at 320–672 (RRTRVLILGV…HADNVTDTQG (353 aa)) is dehydrogenase ArnADH. NAD(+) contacts are provided by residues Asp353 and 374–375 (DI). UDP-alpha-D-glucuronate contacts are provided by residues Ala399, Tyr404, and 438–439 (TS). The active-site Proton acceptor; for decarboxylase activity is the Glu440. UDP-alpha-D-glucuronate is bound by residues Arg466, Asn498, 532 to 541 (KLVDGGAQKR), and Tyr619. Catalysis depends on Arg625, which acts as the Proton donor; for decarboxylase activity.

This sequence in the N-terminal section; belongs to the Fmt family. UDP-L-Ara4N formyltransferase subfamily. It in the C-terminal section; belongs to the NAD(P)-dependent epimerase/dehydratase family. UDP-glucuronic acid decarboxylase subfamily. As to quaternary structure, homohexamer, formed by a dimer of trimers.

It carries out the reaction UDP-alpha-D-glucuronate + NAD(+) = UDP-beta-L-threo-pentopyranos-4-ulose + CO2 + NADH. The catalysed reaction is UDP-4-amino-4-deoxy-beta-L-arabinose + (6R)-10-formyltetrahydrofolate = UDP-4-deoxy-4-formamido-beta-L-arabinose + (6S)-5,6,7,8-tetrahydrofolate + H(+). It participates in nucleotide-sugar biosynthesis; UDP-4-deoxy-4-formamido-beta-L-arabinose biosynthesis; UDP-4-deoxy-4-formamido-beta-L-arabinose from UDP-alpha-D-glucuronate: step 1/3. The protein operates within nucleotide-sugar biosynthesis; UDP-4-deoxy-4-formamido-beta-L-arabinose biosynthesis; UDP-4-deoxy-4-formamido-beta-L-arabinose from UDP-alpha-D-glucuronate: step 3/3. It functions in the pathway bacterial outer membrane biogenesis; lipopolysaccharide biosynthesis. Functionally, bifunctional enzyme that catalyzes the oxidative decarboxylation of UDP-glucuronic acid (UDP-GlcUA) to UDP-4-keto-arabinose (UDP-Ara4O) and the addition of a formyl group to UDP-4-amino-4-deoxy-L-arabinose (UDP-L-Ara4N) to form UDP-L-4-formamido-arabinose (UDP-L-Ara4FN). The modified arabinose is attached to lipid A and is required for resistance to polymyxin and cationic antimicrobial peptides. The protein is Bifunctional polymyxin resistance protein ArnA of Pectobacterium carotovorum subsp. carotovorum (strain PC1).